We begin with the raw amino-acid sequence, 124 residues long: uncharacterized protein (124 aa).

Positions 1–65 (MAENSRYVRL…RPASSSNPDY (65 aa)) are disordered. Polar residues predominate over residues 37–47 (LNSNDAESQQV).

This is an uncharacterized protein from Microplitis demolitor (Parasitoid wasp).